A 131-amino-acid chain; its full sequence is Small ribosomal subunit protein uS8 (131 aa).

It belongs to the universal ribosomal protein uS8 family. In terms of assembly, part of the 30S ribosomal subunit. Contacts proteins S5 and S12.

Functionally, one of the primary rRNA binding proteins, it binds directly to 16S rRNA central domain where it helps coordinate assembly of the platform of the 30S subunit. In Leptothrix cholodnii (strain ATCC 51168 / LMG 8142 / SP-6) (Leptothrix discophora (strain SP-6)), this protein is Small ribosomal subunit protein uS8.